Reading from the N-terminus, the 723-residue chain is Lim and transglutaminase domain protein ltd-1 (723 aa).

One can recognise an LIM zinc-binding domain in the interval 5–72 (QHCNRCGKQV…SNHVPIAGPH (68 aa)).

Belongs to the transglutaminase-like superfamily. In terms of tissue distribution, expressed in the Y and U rectal epithelial cells, in marginal cells of the terminal bulb and isthmus of the pharynx (at protein level).

The protein resides in the cytoplasm. It localises to the cytoskeleton. In terms of biological role, cytoskeleton-associated protein. May play a role in hypodermal cell development. In Caenorhabditis elegans, this protein is Lim and transglutaminase domain protein ltd-1.